The primary structure comprises 1465 residues: DNA polymerase III PolC-type (1465 aa).

An Exonuclease domain is found at 427-583 (YVVFDVETTG…YDAEATGRLL (157 aa)).

It belongs to the DNA polymerase type-C family. PolC subfamily.

Its subcellular location is the cytoplasm. The catalysed reaction is DNA(n) + a 2'-deoxyribonucleoside 5'-triphosphate = DNA(n+1) + diphosphate. In terms of biological role, required for replicative DNA synthesis. This DNA polymerase also exhibits 3' to 5' exonuclease activity. The chain is DNA polymerase III PolC-type from Streptococcus pyogenes serotype M6 (strain ATCC BAA-946 / MGAS10394).